Reading from the N-terminus, the 163-residue chain is Transcription elongation factor GreB (163 aa).

A coiled-coil region spans residues 54–76; that stretch reads GKRRMREIDRRIRFLTKRLEAAV.

It belongs to the GreA/GreB family. GreB subfamily.

In terms of biological role, necessary for efficient RNA polymerase transcription elongation past template-encoded arresting sites. The arresting sites in DNA have the property of trapping a certain fraction of elongating RNA polymerases that pass through, resulting in locked ternary complexes. Cleavage of the nascent transcript by cleavage factors such as GreA or GreB allows the resumption of elongation from the new 3'terminus. GreB releases sequences of up to 9 nucleotides in length. This is Transcription elongation factor GreB from Neisseria meningitidis serogroup B (strain ATCC BAA-335 / MC58).